A 113-amino-acid chain; its full sequence is Putative pterin-4-alpha-carbinolamine dehydratase (113 aa).

It belongs to the pterin-4-alpha-carbinolamine dehydratase family.

The enzyme catalyses (4aS,6R)-4a-hydroxy-L-erythro-5,6,7,8-tetrahydrobiopterin = (6R)-L-erythro-6,7-dihydrobiopterin + H2O. In Legionella pneumophila (strain Lens), this protein is Putative pterin-4-alpha-carbinolamine dehydratase.